The primary structure comprises 87 residues: Acyl-CoA-binding protein (87 aa).

Ser-2 is modified (N-acetylserine). Positions 2 to 87 constitute an ACB domain; sequence SQADFDKAAE…VEELKKKYGI (86 aa). At Lys-8 the chain carries N6-acetyllysine; alternate. Residue Lys-8 is modified to N6-succinyllysine; alternate. Lys-14 contributes to the an acyl-CoA binding site. The residue at position 17 (Lys-17) is an N6-succinyllysine. A Phosphotyrosine modification is found at Tyr-29. An acyl-CoA-binding positions include 29 to 33, Lys-51, Lys-55, and Tyr-74; that span reads YSHFK. Residue Lys-51 is modified to N6-acetyllysine. An N6-acetyllysine; alternate modification is found at Lys-55. Lys-55 is modified (N6-succinyllysine; alternate). Lys-55 carries the post-translational modification N6-(2-hydroxyisobutyryl)lysine; alternate. N6-malonyllysine; alternate is present on Lys-55. Lys-77 carries the N6-acetyllysine; alternate modification. Lys-77 bears the N6-succinyllysine; alternate mark.

Belongs to the ACBP family. As to quaternary structure, monomer.

The protein resides in the endoplasmic reticulum. Its subcellular location is the golgi apparatus. Functionally, binds medium- and long-chain acyl-CoA esters with very high affinity and may function as an intracellular carrier of acyl-CoA esters. It is also able to displace diazepam from the benzodiazepine (BZD) recognition site located on the GABA type A receptor. It is therefore possible that this protein also acts as a neuropeptide to modulate the action of the GABA receptor. The protein is Acyl-CoA-binding protein (Dbi) of Rattus norvegicus (Rat).